We begin with the raw amino-acid sequence, 52 residues long: uncharacterized protein (52 aa).

This is an uncharacterized protein from Thermoproteus tenax (TTV1).